The chain runs to 455 residues: MGLFGLTRFIHEHKLVKPSIISTPPGVLTPVAVDVWNVMYTLLERLYPVGKRENLHGPSVTIHCLGVLLRLLTQRSYYPIFVLERCTDGPLSRGAKAIMSRAMNHDERGTSDLTRVLLSSNTSCSIKYNKTSETYDSVFRNSSTSCIPSEENKSQDMFLDGCPRQTDKTICLRDQNVCSLTSTMPSRGHPNHRLYHKLCASLIRWMGYAYVEAVDIEADEACANLFHTRTVALVYTTDTDLLFMGCDILLDAIPMFAPVVRCRDLLQYLGITYPEFLVAFVRCQTDLHTSDNLKSVQQVIQDTGLKVPHQMDTSTRSPTYDSWRHGEVFKSLTVATSGKTENGVSVSKYASNRSEVTVDASWALNLLPPSSSPLDNLERAFVEHIIAVVTPLTRGRLKLMKRVNIMQNTADPYMVINTLYHNLKGEKMARQYARIFKQFIPTPLPLNTVLTKYWN.

The protein belongs to the herpesviridae VHS protein family.

Its subcellular location is the virion. Functionally, minor structural protein that acts as an endoribonuclease during lytic infection. Degrades host mRNAs in the cytoplasm by cutting them at preferred sites, including some in regions of translation initiation. The sequence is that of Virion host shutoff protein (17) from Homo sapiens (Human).